The chain runs to 279 residues: Energy-coupling factor transporter ATP-binding protein EcfA2 (279 aa).

The ABC transporter domain maps to 3 to 245 (ITLKNVSYTY…LDFMESIQLG (243 aa)). 40-47 (GHTGSGKS) contributes to the ATP binding site.

This sequence belongs to the ABC transporter superfamily. Energy-coupling factor EcfA family. As to quaternary structure, forms a stable energy-coupling factor (ECF) transporter complex composed of 2 membrane-embedded substrate-binding proteins (S component), 2 ATP-binding proteins (A component) and 2 transmembrane proteins (T component).

The protein resides in the cell membrane. In terms of biological role, ATP-binding (A) component of a common energy-coupling factor (ECF) ABC-transporter complex. Unlike classic ABC transporters this ECF transporter provides the energy necessary to transport a number of different substrates. The protein is Energy-coupling factor transporter ATP-binding protein EcfA2 of Streptococcus sanguinis (strain SK36).